The following is a 440-amino-acid chain: Light-independent protochlorophyllide reductase subunit N (440 aa).

Cysteine 15, cysteine 40, and cysteine 99 together coordinate [4Fe-4S] cluster.

It belongs to the BchN/ChlN family. In terms of assembly, protochlorophyllide reductase is composed of three subunits; BchL, BchN and BchB. Forms a heterotetramer of two BchB and two BchN subunits. [4Fe-4S] cluster serves as cofactor.

It catalyses the reaction chlorophyllide a + oxidized 2[4Fe-4S]-[ferredoxin] + 2 ADP + 2 phosphate = protochlorophyllide a + reduced 2[4Fe-4S]-[ferredoxin] + 2 ATP + 2 H2O. The protein operates within porphyrin-containing compound metabolism; bacteriochlorophyll biosynthesis (light-independent). Functionally, component of the dark-operative protochlorophyllide reductase (DPOR) that uses Mg-ATP and reduced ferredoxin to reduce ring D of protochlorophyllide (Pchlide) to form chlorophyllide a (Chlide). This reaction is light-independent. The NB-protein (BchN-BchB) is the catalytic component of the complex. This Heliobacterium mobile (Heliobacillus mobilis) protein is Light-independent protochlorophyllide reductase subunit N.